The sequence spans 498 residues: L-amino acid oxidase Cdc18 (498 aa).

An N-terminal signal peptide occupies residues 1–2 (SC). C12 and C173 are joined by a disulfide. Residues 45-46 (MA), 65-66 (EA), R73, and 87-90 (GPMR) contribute to the FAD site. Substrate-binding residues include R90 and H223. V263 serves as a coordination point for FAD. C333 and C414 are joined by a disulfide. N-linked (GlcNAc...) asparagine glycosylation is present at N363. Residue Y374 participates in substrate binding. FAD-binding positions include E459 and 466–471 (GWIDST). A substrate-binding site is contributed by 466 to 467 (GW).

This sequence belongs to the flavin monoamine oxidase family. FIG1 subfamily. In terms of assembly, monomer. This is in contrast with most of its orthologs, that are non-covalently linked homodimers. FAD serves as cofactor. In terms of tissue distribution, expressed by the venom gland.

Its subcellular location is the secreted. The catalysed reaction is an L-alpha-amino acid + O2 + H2O = a 2-oxocarboxylate + H2O2 + NH4(+). The enzyme catalyses L-leucine + O2 + H2O = 4-methyl-2-oxopentanoate + H2O2 + NH4(+). Functionally, catalyzes an oxidative deamination of predominantly hydrophobic and aromatic L-amino acids, thus producing hydrogen peroxide that may contribute to the diverse toxic effects of this enzyme. Shows activity on L-Leu. Damages cell membranes of the Gram-positive bacteria S.aureus (MIC=8 ug/ml and MBC=16 ug/ml) and the Gram-negative bacteria A.baumannii (MIC=16 ug/ml and MBC=32 ug/ml). This antimicrobial activity is dependent on the production of hydrogen peroxyde, since it is inhibited by catalase, a hydrogen peroxyde scavenger. This Crotalus durissus cumanensis (South American rattlesnake) protein is L-amino acid oxidase Cdc18.